A 591-amino-acid polypeptide reads, in one-letter code: MINNALRTLISSATEQSLDDVLEHEFRTAVQLQQMDQFEWHQVEADLWKRTCLGHEASASFNQNIAHGHTELSLMTSWRVHQPSSSRITGSELELDQLVARVRQAWIQARYLRPEVGVELDTHTDPTVAQTMCYRLLRDEESIQEWLDETFVVKRLGDPGVATPAELCAYTYNRPLATKGKKSMLYLILPRLDDEQRTAYTIWNVSHAVTDGGSLAEVFNTLFQCVIDATPSEPYDSIYTPSAFELNVLPRMPRSVVMAYRQQYQPKPEEIAKAHKVAEVNMRMITEKMGESLALMPSTSWPERKHETVCLCRELEANEVRELLKFAKQVHSGITYLASAATILSAAETFPERKASSKGALVGMVRNARRWISATPLDASLGASTPLGSDAVFLWVPIDTHKTLEPSFSRMQELVTTARHIRHELDKHLTTPHCISSYPYVAESSIQGLNQQWSQIKAVQSPSSSSSQKEIAGIIGAQAPGFSSVGMMRIRPRFEPVSANARASGLWLERTDFTHTGRQINASPWISMFNVDGRIKLQLGFDTKFHEVEKMNQWLDRTVVWMRICAAAAATTSTSVSSTSVDATAPVFARL.

A peroxisomal targeting signal type 1 region spans residues 589–591 (ARL).

Belongs to the trichothecene O-acetyltransferase family.

Its subcellular location is the peroxisome. It participates in secondary metabolite biosynthesis. In terms of biological role, acyl-CoA-dependent acyltransferase; part of the gene cluster that mediates the biosynthesis of mannosylerythritol lipids (MELs), surface-active substances that enhance the availability of water-insoluble substrates. Mannosylerythritol lipid production is responsible for hemolytic activity of Ustilago maydis. Depending on the number of acetyl groups, mannosylerythritol lipids can be differentiated into MEL A (fully acetylated), MEL B and MEL C (monoacetylated at R-6 and R-4, respectively), and the fully deacetylated MEL D. The first step in the pathway is the generation of mannosylerythritol by the glycosyltransferase EMT1 which catalyzes the transfer of GDP-mannose to the C-4 atom of meso-erythritol. This reaction has to be stereospecific, since only mannosyl-D-erythritol is generated. The produced disaccharide is subsequently acylated with fatty acids of various lengths derived from the peroxisomal beta-oxidation by the peroxisomal acyltransferases MAC1 and MAC2 at positions C-2 and C-3, repectively. The existence of MEL derivatives which carry an acetyl group at C-2 implies that at least MAC1 also accepts acetyl-CoA as a donor. The final step of MEL biosynthesis is the acetylation of the fully acylated mannosylerythritol lipids catalyzed by the acetyl-CoA-dependent acetyltransferase MAT1. MAT1 displays a relaxed regioselectivity and is able to transfer acetylgroups to both positions C-4 and C-6 of the mannosyl moiety. This is Acyl-CoA-dependent acyltransferase MAC1 from Mycosarcoma maydis (Corn smut fungus).